We begin with the raw amino-acid sequence, 124 residues long: Small ribosomal subunit protein uS13 (124 aa).

Residues 91–124 (HRKGLPVNGQNTRNNARTRKGKPKAVTGKKQAGK) are disordered.

It belongs to the universal ribosomal protein uS13 family. Part of the 30S ribosomal subunit. Forms a loose heterodimer with protein S19. Forms two bridges to the 50S subunit in the 70S ribosome.

In terms of biological role, located at the top of the head of the 30S subunit, it contacts several helices of the 16S rRNA. In the 70S ribosome it contacts the 23S rRNA (bridge B1a) and protein L5 of the 50S subunit (bridge B1b), connecting the 2 subunits; these bridges are implicated in subunit movement. Contacts the tRNAs in the A and P-sites. The polypeptide is Small ribosomal subunit protein uS13 (Acholeplasma laidlawii (strain PG-8A)).